The primary structure comprises 260 residues: MTDTNVLANSATDNQETTHFGFETVRKDEKVHKVAQVFHSVAAKYDIMNDLMSGGIHRLWKRFTIDCSGARPGQRILDLGGGTGDLTAKFSRIVGEKGHVILADINNSMLNVGRDKLRDSGVVGNVHYVQANAEELPFPDNYFDCITISFCLRNVTDKDKALRSMFRVLKPGGRLLVLEFSKPILEPLSKLYDTYSFHILPKMGQLIANDADSYRYLAESIRMHPDQETLKGMMEEAGFEQTTYYNLTGGIVALHRGYKF.

S-adenosyl-L-methionine-binding positions include Thr83, Asp104, 132 to 133 (NA), and Ser149.

Belongs to the class I-like SAM-binding methyltransferase superfamily. MenG/UbiE family.

It catalyses the reaction a 2-demethylmenaquinol + S-adenosyl-L-methionine = a menaquinol + S-adenosyl-L-homocysteine + H(+). The catalysed reaction is a 2-methoxy-6-(all-trans-polyprenyl)benzene-1,4-diol + S-adenosyl-L-methionine = a 5-methoxy-2-methyl-3-(all-trans-polyprenyl)benzene-1,4-diol + S-adenosyl-L-homocysteine + H(+). Its pathway is quinol/quinone metabolism; menaquinone biosynthesis; menaquinol from 1,4-dihydroxy-2-naphthoate: step 2/2. It participates in cofactor biosynthesis; ubiquinone biosynthesis. Methyltransferase required for the conversion of demethylmenaquinol (DMKH2) to menaquinol (MKH2) and the conversion of 2-polyprenyl-6-methoxy-1,4-benzoquinol (DDMQH2) to 2-polyprenyl-3-methyl-6-methoxy-1,4-benzoquinol (DMQH2). This is Ubiquinone/menaquinone biosynthesis C-methyltransferase UbiE from Vibrio cholerae serotype O1 (strain ATCC 39315 / El Tor Inaba N16961).